The primary structure comprises 46 residues: Thymosin beta-a (46 aa).

The span at Thr-21 to Pro-30 shows a compositional bias: polar residues. The tract at residues Thr-21–Lys-46 is disordered. Residues Thr-31 to Lys-46 show a composition bias toward basic and acidic residues.

Belongs to the thymosin beta family.

It is found in the cytoplasm. Its subcellular location is the cytoskeleton. Its function is as follows. Plays an important role in the organization of the cytoskeleton. Binds to and sequesters actin monomers (G actin) and therefore inhibits actin polymerization. In Cyprinus carpio (Common carp), this protein is Thymosin beta-a.